A 171-amino-acid chain; its full sequence is Peptide deformylase (171 aa).

The Fe cation site is built by Cys-91 and His-133. Glu-134 is a catalytic residue. His-137 is a Fe cation binding site.

It belongs to the polypeptide deformylase family. Fe(2+) serves as cofactor.

The catalysed reaction is N-terminal N-formyl-L-methionyl-[peptide] + H2O = N-terminal L-methionyl-[peptide] + formate. In terms of biological role, removes the formyl group from the N-terminal Met of newly synthesized proteins. Requires at least a dipeptide for an efficient rate of reaction. N-terminal L-methionine is a prerequisite for activity but the enzyme has broad specificity at other positions. This Sodalis glossinidius (strain morsitans) protein is Peptide deformylase.